Reading from the N-terminus, the 284-residue chain is NAD kinase (284 aa).

The Proton acceptor role is filled by aspartate 70. Residues 70–71 (DG), 139–140 (NE), lysine 167, aspartate 169, leucine 177, 180–185 (TAYNLS), and glutamine 236 contribute to the NAD(+) site.

The protein belongs to the NAD kinase family. A divalent metal cation serves as cofactor.

The protein localises to the cytoplasm. The catalysed reaction is NAD(+) + ATP = ADP + NADP(+) + H(+). Involved in the regulation of the intracellular balance of NAD and NADP, and is a key enzyme in the biosynthesis of NADP. Catalyzes specifically the phosphorylation on 2'-hydroxyl of the adenosine moiety of NAD to yield NADP. In Helicobacter pylori (strain P12), this protein is NAD kinase.